The sequence spans 506 residues: 2-isopropylmalate synthase (506 aa).

A Pyruvate carboxyltransferase domain is found at 4-266 (ILFMDTTLRD…QSSIILKEIK (263 aa)). Residues aspartate 13, histidine 201, histidine 203, and asparagine 237 each coordinate Mn(2+). The tract at residues 390 to 506 (NIKQLQVHFV…KLKALLTLVK (117 aa)) is regulatory domain.

This sequence belongs to the alpha-IPM synthase/homocitrate synthase family. LeuA type 1 subfamily. In terms of assembly, homodimer. Mn(2+) serves as cofactor.

It is found in the cytoplasm. The catalysed reaction is 3-methyl-2-oxobutanoate + acetyl-CoA + H2O = (2S)-2-isopropylmalate + CoA + H(+). The protein operates within amino-acid biosynthesis; L-leucine biosynthesis; L-leucine from 3-methyl-2-oxobutanoate: step 1/4. Catalyzes the condensation of the acetyl group of acetyl-CoA with 3-methyl-2-oxobutanoate (2-ketoisovalerate) to form 3-carboxy-3-hydroxy-4-methylpentanoate (2-isopropylmalate). The protein is 2-isopropylmalate synthase of Bacillus cytotoxicus (strain DSM 22905 / CIP 110041 / 391-98 / NVH 391-98).